The following is a 678-amino-acid chain: NADPH--cytochrome P450 reductase (678 aa).

Over 1–21 (MADSNMDAGTTTSEMVAEEVS) the chain is Lumenal. The chain crosses the membrane as a helical span at residues 22 to 42 (LFSTTDVILFSLIVGVMTYWF). Residues 43–678 (LFRKKKEEVP…KGRYSLDVWS (636 aa)) are Cytoplasmic-facing. At Ser-63 the chain carries Phosphoserine. The 145-residue stretch at 80–224 (IIVFYGSQTG…DFITWREQFW (145 aa)) folds into the Flavodoxin-like domain. Residues 86-91 (SQTGTA), 138-141 (ATYG), 173-182 (LGNKTYEHFN), and Asp-208 each bind FMN. An FAD-binding FR-type domain is found at 279–521 (KNPFLAVVTT…YVRKSQFRLP (243 aa)). Residue Arg-298 coordinates NADP(+). Residues Arg-424, 454 to 457 (RYYS), 472 to 474 (CAV), Tyr-478, and 488 to 491 (GVAT) each bind FAD. Residues Thr-535, 596–597 (SR), 602–606 (KVYVQ), and Asp-639 each bind NADP(+). FAD is bound at residue Trp-677.

The protein belongs to the NADPH--cytochrome P450 reductase family. It in the N-terminal section; belongs to the flavodoxin family. In the C-terminal section; belongs to the flavoprotein pyridine nucleotide cytochrome reductase family. FAD is required as a cofactor. FMN serves as cofactor.

It is found in the endoplasmic reticulum membrane. It catalyses the reaction 2 oxidized [cytochrome P450] + NADPH = 2 reduced [cytochrome P450] + NADP(+) + H(+). This enzyme is required for electron transfer from NADP to cytochrome P450 in microsomes. It can also provide electron transfer to heme oxygenase and cytochrome B5. The sequence is that of NADPH--cytochrome P450 reductase from Bos taurus (Bovine).